A 485-amino-acid chain; its full sequence is MEKQVRVRYAPSPTGHLHIGNARTALFNYLFARHQDGKFIIRIEDTDVKRNVAGGEESQLKYLKWLGMDWDEGVDVGGKYGPYRQTERLDIYKELYEDLLERGLAYKCYMTEEELEAEREGQIARGETPRYAGNHRNLTEEQIAQFEAEGRVPSIRFRVPDNREYKFNDIVKGDVTFHSNDFGDFVIVKKDGIPTYNFAVAVDDHLMEITHVLRGDDHISNTPKQMMIYEAFGWDTPQFGHMTLIVNESRKKLSKRDESIIQFIEQYEALGYLPEAIFNFIALLGWSPVGEEEIFSKDEFIKMFDAARLSKSPALFDSQKLKWMNNQYMKKQDLDTVVALSLPHLVKAGRVSEDLSEQEAAWVRDVIALYHEQMSYGAEIVELSEMFFKDHVDFEEEGKEVLKGEQVPEVLRAFAVELEALEEVEPATIKKAIKAVQKETGHKGKNLFMPIRVATTGQTHGPELPNAIALLGKEKVLKRIQKVIG.

The 'HIGH' region signature appears at 11–21; the sequence is PSPTGHLHIGN. The short motif at 252–256 is the 'KMSKS' region element; it reads KLSKR. Lys-255 serves as a coordination point for ATP.

Belongs to the class-I aminoacyl-tRNA synthetase family. Glutamate--tRNA ligase type 1 subfamily. Monomer.

The protein localises to the cytoplasm. The catalysed reaction is tRNA(Glu) + L-glutamate + ATP = L-glutamyl-tRNA(Glu) + AMP + diphosphate. In terms of biological role, catalyzes the attachment of glutamate to tRNA(Glu) in a two-step reaction: glutamate is first activated by ATP to form Glu-AMP and then transferred to the acceptor end of tRNA(Glu). The sequence is that of Glutamate--tRNA ligase from Bacillus cytotoxicus (strain DSM 22905 / CIP 110041 / 391-98 / NVH 391-98).